A 594-amino-acid polypeptide reads, in one-letter code: DNA mismatch repair protein MutL (594 aa).

The protein belongs to the DNA mismatch repair MutL/HexB family.

In terms of biological role, this protein is involved in the repair of mismatches in DNA. It is required for dam-dependent methyl-directed DNA mismatch repair. May act as a 'molecular matchmaker', a protein that promotes the formation of a stable complex between two or more DNA-binding proteins in an ATP-dependent manner without itself being part of a final effector complex. The protein is DNA mismatch repair protein MutL of Tolumonas auensis (strain DSM 9187 / NBRC 110442 / TA 4).